The following is a 107-amino-acid chain: Pre-mRNA-splicing factor RDS3 (107 aa).

Belongs to the PHF5 family. In terms of assembly, component of the spliceosome where it interacts with CUS1, HSH49, HSH155, IST3 and RSE1. Also interacts with YRA1.

It is found in the nucleus. Functionally, required for pre-mRNA splicing. Involved in regulation of drug sensitivity and may play a role in multidrug resistance. This Saccharomyces cerevisiae (strain ATCC 204508 / S288c) (Baker's yeast) protein is Pre-mRNA-splicing factor RDS3 (RDS3).